A 515-amino-acid chain; its full sequence is Maturase K (515 aa).

It belongs to the intron maturase 2 family. MatK subfamily.

The protein resides in the plastid. It is found in the chloroplast. Functionally, usually encoded in the trnK tRNA gene intron. Probably assists in splicing its own and other chloroplast group II introns. This is Maturase K from Pinus yunnanensis (Yunnan pine).